The sequence spans 246 residues: 1-(5-phosphoribosyl)-5-[(5-phosphoribosylamino)methylideneamino] imidazole-4-carboxamide isomerase (246 aa).

The active-site Proton acceptor is aspartate 12. The active-site Proton donor is aspartate 134.

This sequence belongs to the HisA/HisF family.

The protein resides in the cytoplasm. The catalysed reaction is 1-(5-phospho-beta-D-ribosyl)-5-[(5-phospho-beta-D-ribosylamino)methylideneamino]imidazole-4-carboxamide = 5-[(5-phospho-1-deoxy-D-ribulos-1-ylimino)methylamino]-1-(5-phospho-beta-D-ribosyl)imidazole-4-carboxamide. It participates in amino-acid biosynthesis; L-histidine biosynthesis; L-histidine from 5-phospho-alpha-D-ribose 1-diphosphate: step 4/9. The protein is 1-(5-phosphoribosyl)-5-[(5-phosphoribosylamino)methylideneamino] imidazole-4-carboxamide isomerase of Haloarcula marismortui (strain ATCC 43049 / DSM 3752 / JCM 8966 / VKM B-1809) (Halobacterium marismortui).